Reading from the N-terminus, the 678-residue chain is MINKGKGWRLATVAAALMMAGSAWATEYSASFKNADIEEFINTVGKNLSKTIIIEPSVRGKINVRSYDLLNEEQYYQFFLSVLDVYGFAVVPMDNGVLKVVRSKDAKTSAIPVVDETNPGIGDEMVTRVVPVRNVSVRELAPLLRQLNDNAGGGNVVHYDPSNVLLITGRAAVVNRLVEVVRRVDKAGDQEVDIIKLKYASAGEMVRLVTNLNKDGNSQGGNTSLLLAPKVVADERTNSVVVSGEPKARARIIQMVRQLDRDLQSQGNTRVFYLKYGKAKDMVEVLKGVSSSIEADKKGGGTATTAGGGASIGGGKLAISADETTNALVITAQPDVMAELEQVVAKLDIRRAQVLVEAIIVEIADGDGLNLGVQWANTNGGGTQFTNAGPGIGSVAIAAKDYKDNGTTTGLAKLAENFNGMAAGFYQGNWAMLVTALSTNTKSDILSTPSIVTMDNKEASFNVGQEVPVQTGTQNSTSGDTTFSTIERKTVGTKLVVTPQINEGDSVLLTIEQEVSSVGKQATGTDGLGPTFDTRTVKNAVLVKSGETVVLGGLMDEQTKEEVSKVPLLGDIPVLGYLFRSTSNNTSKRNLMVFIRPTILRDANVYSGISSNKYTLFRAQQLDAVAQEGYATSPDRQVLPEYGQDVTMSPEAQKQIELMKTHQQATADGVQPFVQGNK.

The signal sequence occupies residues 1–25 (MINKGKGWRLATVAAALMMAGSAWA). The tract at residues 26 to 122 (TEYSASFKNA…VVDETNPGIG (97 aa)) is N0. The interval 124 to 188 (EMVTRVVPVR…EVVRRVDKAG (65 aa)) is N1. An N2 region spans residues 189–264 (DQEVDIIKLK…MVRQLDRDLQ (76 aa)). The tract at residues 267–348 (GNTRVFYLKY…ELEQVVAKLD (82 aa)) is N3. The segment at 353–602 (QVLVEAIIVE…VFIRPTILRD (250 aa)) is secretin. A s domain region spans residues 604–678 (NVYSGISSNK…GVQPFVQGNK (75 aa)).

It belongs to the bacterial secretin family. GSP D subfamily. As to quaternary structure, forms a cylindrical channel with 15 subunits.

It localises to the cell outer membrane. Functionally, involved in a type II secretion system (T2SS, formerly general secretion pathway, GSP) for the export of proteins. This subunit forms the outer membrane channel. This is Secretin ExeD (exeD) from Aeromonas hydrophila.